The sequence spans 750 residues: Photosystem I P700 chlorophyll a apoprotein A1 (750 aa).

8 helical membrane-spanning segments follow: residues 72 to 95 (VFSAHFGQLAVIFIWLSGMYFHGA), 158 to 181 (LYSTAIGGLVMAGLMLFAGWFHYH), 197 to 221 (LNHHLAGLLGLGSLSWAGHQIHVSL), 293 to 311 (TAHHHLAIAVLFLVAGHMY), 348 to 371 (WHAQLAINLALFGSLSIIVAHHMY), 387 to 413 (LSIFTHHTWIGGFCIVGGAAHAAIFMV), 435 to 457 (AIISHLNWVCIFLGFHSFGLYIH), and 532 to 550 (FLVHHIHAFTIHVTVLILL). [4Fe-4S] cluster-binding residues include C574 and C583. The next 2 helical transmembrane spans lie at 590–611 (HVFLGLFWMYNSLSIAIFHFSW) and 664–686 (LSAYGLMFLGAHFVWAFSLMFLF). H675 contacts chlorophyll a'. Chlorophyll a is bound by residues M683 and Y691. W692 is a phylloquinone binding site. The helical transmembrane segment at 724–744 (AVGVAHYLLGGIATTWAFFLA) threads the bilayer.

The protein belongs to the PsaA/PsaB family. In terms of assembly, the PsaA/B heterodimer binds the P700 chlorophyll special pair and subsequent electron acceptors. PSI consists of a core antenna complex that captures photons, and an electron transfer chain that converts photonic excitation into a charge separation. The eukaryotic PSI reaction center is composed of at least 11 subunits. Requires P700 is a chlorophyll a/chlorophyll a' dimer, A0 is one or more chlorophyll a, A1 is one or both phylloquinones and FX is a shared 4Fe-4S iron-sulfur center. as cofactor.

Its subcellular location is the plastid. The protein localises to the chloroplast thylakoid membrane. The catalysed reaction is reduced [plastocyanin] + hnu + oxidized [2Fe-2S]-[ferredoxin] = oxidized [plastocyanin] + reduced [2Fe-2S]-[ferredoxin]. Functionally, psaA and PsaB bind P700, the primary electron donor of photosystem I (PSI), as well as the electron acceptors A0, A1 and FX. PSI is a plastocyanin-ferredoxin oxidoreductase, converting photonic excitation into a charge separation, which transfers an electron from the donor P700 chlorophyll pair to the spectroscopically characterized acceptors A0, A1, FX, FA and FB in turn. Oxidized P700 is reduced on the lumenal side of the thylakoid membrane by plastocyanin. The sequence is that of Photosystem I P700 chlorophyll a apoprotein A1 from Chlorokybus atmophyticus (Soil alga).